The sequence spans 121 residues: Large ribosomal subunit protein uL14c (121 aa).

It belongs to the universal ribosomal protein uL14 family. Part of the 50S ribosomal subunit.

Its subcellular location is the plastid. It localises to the chloroplast. In terms of biological role, binds to 23S rRNA. The chain is Large ribosomal subunit protein uL14c from Euglena gracilis.